The following is a 622-amino-acid chain: Apical membrane antigen 1 (622 aa).

Residues 1 to 24 (MRKLYCVLLLSAFEFTYMINFGRG) form the signal peptide. At 25–546 (QNYWEHPYQK…EHKPTYDKMK (522 aa)) the chain is on the extracellular side. Cystine bridges form between C149/C302, C217/C247, C263/C275, C320/C418, and C337/C409. Residue N162 is glycosylated (N-linked (GlcNAc...) asparagine). Residues N286, N371, N421, N422, and N499 are each glycosylated (N-linked (GlcNAc...) asparagine). Intrachain disulfides connect C443–C502, C490–C507, and C492–C509. Residues 547-567 (IIIASSAAVAVLATILMVYLY) form a helical membrane-spanning segment. Over 568 to 622 (KRKGNAEKYDKMDEPQDYGKSNSRNDEMLDPEASFWGEEKRASHTTPVLMEKPYY) the chain is Cytoplasmic. Positions 577-607 (DKMDEPQDYGKSNSRNDEMLDPEASFWGEEK) are disordered.

The protein belongs to the apicomplexan parasites AMA1 family.

The protein resides in the membrane. Its function is as follows. Involved in parasite invasion of erythrocytes. This Plasmodium falciparum (isolate 7G8) protein is Apical membrane antigen 1 (AMA-1).